A 171-amino-acid chain; its full sequence is Adenine phosphoribosyltransferase (171 aa).

Belongs to the purine/pyrimidine phosphoribosyltransferase family. In terms of assembly, homodimer.

The protein localises to the cytoplasm. It carries out the reaction AMP + diphosphate = 5-phospho-alpha-D-ribose 1-diphosphate + adenine. The protein operates within purine metabolism; AMP biosynthesis via salvage pathway; AMP from adenine: step 1/1. Functionally, catalyzes a salvage reaction resulting in the formation of AMP, that is energically less costly than de novo synthesis. This chain is Adenine phosphoribosyltransferase, found in Gloeobacter violaceus (strain ATCC 29082 / PCC 7421).